The chain runs to 299 residues: 4-sulfomuconolactone hydrolase (299 aa).

It belongs to the metallo-dependent hydrolases superfamily. Sulfomuconolactone hydrolase family. In terms of assembly, monomer. Requires Zn(2+) as cofactor.

It carries out the reaction 4-sulfomuconolactone + H2O = maleylacetate + sulfite + 2 H(+). Functionally, involved in the degradation of 4-sulfocatechol which is a central intermediate in the degradation of substituted sulfonated benzenes. Catalyzes the hydrolytical desulfonation of 4-sulfomuconolactone to yield maleylacetate. The chain is 4-sulfomuconolactone hydrolase from Rhizobium radiobacter (Agrobacterium tumefaciens).